A 509-amino-acid polypeptide reads, in one-letter code: Glutamyl-tRNA(Gln) amidotransferase subunit A (509 aa).

Catalysis depends on charge relay system residues Lys-75 and Ser-150. The active-site Acyl-ester intermediate is Ser-174. A disordered region spans residues 471–509 (DWHKRRPPLGQPPLEQAQGTAQQPKAKSKSTKGSKKSKS). Basic residues predominate over residues 496–509 (AKSKSTKGSKKSKS).

Belongs to the amidase family. GatA subfamily. As to quaternary structure, heterotrimer of A, B and C subunits.

The catalysed reaction is L-glutamyl-tRNA(Gln) + L-glutamine + ATP + H2O = L-glutaminyl-tRNA(Gln) + L-glutamate + ADP + phosphate + H(+). Functionally, allows the formation of correctly charged Gln-tRNA(Gln) through the transamidation of misacylated Glu-tRNA(Gln) in organisms which lack glutaminyl-tRNA synthetase. The reaction takes place in the presence of glutamine and ATP through an activated gamma-phospho-Glu-tRNA(Gln). The protein is Glutamyl-tRNA(Gln) amidotransferase subunit A of Synechococcus sp. (strain JA-3-3Ab) (Cyanobacteria bacterium Yellowstone A-Prime).